The following is a 1454-amino-acid chain: Receptor-type tyrosine-protein phosphatase T (1454 aa).

The signal sequence occupies residues 1 to 29 (MGSLGGLALCLLRLLLLGLQRPPLPGAGA). Over 30-770 (QSAAGGCSFD…EKQVDNTVKM (741 aa)) the chain is Extracellular. In terms of domain architecture, MAM spans 34–195 (GGCSFDEHYS…VRVLAHPCRK (162 aa)). Asn82, Asn102, Asn141, and Asn212 each carry an N-linked (GlcNAc...) asparagine glycan. The region spanning 197–288 (PHFLRLQNVE…SGVSNYAELI (92 aa)) is the Ig-like C2-type domain. Residues Cys217 and Cys271 are joined by a disulfide bond. Fibronectin type-III domains are found at residues 295–388 (PIAP…TKCA), 393–487 (GPQN…TEED), and 488–594 (VPGA…SAPS). Asn425, Asn514, Asn551, Asn605, Asn658, and Asn688 each carry an N-linked (GlcNAc...) asparagine glycan. One can recognise a Fibronectin type-III 4 domain in the interval 670 to 767 (AELKPSNLPV…VEPEKQVDNT (98 aa)). The chain crosses the membrane as a helical span at residues 771 to 791 (AGVIAGLLMFIIILLGVMLTI). Over 792-1454 (KRRKLAKKQK…EVALEYLSSF (663 aa)) the chain is Cytoplasmic. The interval 800-852 (QKETQSGAQREMGPVASTDKPTAKLGTNRNDEGFSSSSQDVNGFTDGSRGELS) is disordered. Over residues 824–841 (LGTNRNDEGFSSSSQDVN) the composition is skewed to polar residues. Tyrosine-protein phosphatase domains lie at 902-1156 (FKEE…ILEA) and 1188-1450 (IKDE…ALEY). Residues Asp1065, 1097-1103 (CSAGAGR), and Gln1141 contribute to the substrate site. The active-site Phosphocysteine intermediate is Cys1097. Ser1221 carries the phosphoserine modification. Cys1391 acts as the Phosphocysteine intermediate in catalysis.

The protein belongs to the protein-tyrosine phosphatase family. Receptor class 2B subfamily. Expression is restricted to the CNS. Distributed throughout the brain and spinal cord.

The protein localises to the membrane. It carries out the reaction O-phospho-L-tyrosyl-[protein] + H2O = L-tyrosyl-[protein] + phosphate. In terms of biological role, may be involved in both signal transduction and cellular adhesion in the CNS. May have specific signaling roles in the tyrosine phosphorylation/dephosphorylation pathway in the anterior compartment of the adult cerebellar cortex. The sequence is that of Receptor-type tyrosine-protein phosphatase T (Ptprt) from Mus musculus (Mouse).